The following is a 393-amino-acid chain: HORMA domain-containing protein 1 (393 aa).

Residues 24–226 (QQSLVLVKRL…TPFHTFKVKV (203 aa)) form the HORMA domain. The tract at residues 322-393 (SKTSELDVSE…RKFSEPKERI (72 aa)) is disordered. A compositionally biased stretch (basic and acidic residues) spans 352–361 (KSKENRKRTQ). The residue at position 375 (Ser-375) is a Phosphoserine. The short motif at 382–385 (KRRK) is the Nuclear localization signal element.

Interacts with HORMAD2. Interacts with IHO1. In terms of processing, phosphorylated at Ser-376 in a SPO11-dependent manner.

Its subcellular location is the nucleus. The protein localises to the chromosome. Functionally, plays a key role in meiotic progression. Regulates 3 different functions during meiosis: ensures that sufficient numbers of processed DNA double-strand breaks (DSBs) are available for successful homology search by increasing the steady-state numbers of single-stranded DSB ends. Promotes synaptonemal-complex formation independently of its role in homology search. Plays a key role in the male mid-pachytene checkpoint and the female meiotic prophase checkpoint: required for efficient build-up of ATR activity on unsynapsed chromosome regions, a process believed to form the basis of meiotic silencing of unsynapsed chromatin (MSUC) and meiotic prophase quality control in both sexes. The protein is HORMA domain-containing protein 1 (HORMAD1) of Bos taurus (Bovine).